Reading from the N-terminus, the 239-residue chain is 1-(5-phosphoribosyl)-5-[(5-phosphoribosylamino)methylideneamino] imidazole-4-carboxamide isomerase (239 aa).

The Proton acceptor role is filled by D8. The Proton donor role is filled by D129.

The protein belongs to the HisA/HisF family.

It localises to the cytoplasm. It catalyses the reaction 1-(5-phospho-beta-D-ribosyl)-5-[(5-phospho-beta-D-ribosylamino)methylideneamino]imidazole-4-carboxamide = 5-[(5-phospho-1-deoxy-D-ribulos-1-ylimino)methylamino]-1-(5-phospho-beta-D-ribosyl)imidazole-4-carboxamide. The protein operates within amino-acid biosynthesis; L-histidine biosynthesis; L-histidine from 5-phospho-alpha-D-ribose 1-diphosphate: step 4/9. This chain is 1-(5-phosphoribosyl)-5-[(5-phosphoribosylamino)methylideneamino] imidazole-4-carboxamide isomerase, found in Bacillus anthracis (strain A0248).